A 132-amino-acid polypeptide reads, in one-letter code: Replication enhancer protein (132 aa).

It belongs to the geminiviridae replication enhancer protein family. In terms of assembly, homooligomer. Interacts with the replication-associated protein (REP). Interacts with host proliferating cell nuclear antigen (PCNA). Interacts with host retinoblastoma-related protein 1 (RBR1), and may thereby deregulate the host cell cycle. Oligomerization and interaction with PCNA are necessary for optimal replication enhancement.

Its function is as follows. Increases viral DNA accumulation. Enhances infectivity and symptom expression. The protein is Replication enhancer protein of Abutilon (Upland cotton).